The sequence spans 676 residues: Envelope glycoprotein (676 aa).

Residues 1–32 (MGASGILQLPRERFRKTSFFVWVIILFHKVFS) form the signal peptide. At 33-650 (IPLGVVHNNT…GSNWWTGWKQ (618 aa)) the chain is on the extracellular side. Asparagine 40 carries N-linked (GlcNAc...) asparagine; by host glycosylation. 5 cysteine pairs are disulfide-bonded: cysteine 53/cysteine 609, cysteine 108/cysteine 135, cysteine 121/cysteine 147, cysteine 511/cysteine 556, and cysteine 601/cysteine 608. The receptor-binding stretch occupies residues 54-201 (RDKLSSTSQL…DFFQSPPLHE (148 aa)). 5 N-linked (GlcNAc...) asparagine; by host glycosylation sites follow: asparagine 204, asparagine 228, asparagine 257, asparagine 268, and asparagine 296. Positions 305–485 (ELSFVPVPET…LSGPGFLTNT (181 aa)) are mucin-like region. Residues 356–463 (IKGKDTMPTT…PTTLPEQHTA (108 aa)) form a disordered region. Residues 361–374 (TMPTTVTGVPTTTP) are compositionally biased toward low complexity. The span at 402-422 (TTQPAKTTSQPTNSTESTTLN) shows a compositional bias: polar residues. The N-linked (GlcNAc...) asparagine; by host glycan is linked to asparagine 414. The segment covering 423–440 (PTSEPSSRGTGPSSPTVP) has biased composition (low complexity). Residue asparagine 441 is glycosylated (N-linked (GlcNAc...) asparagine; by host). The span at 452–463 (TTPTTLPEQHTA) shows a compositional bias: polar residues. The tract at residues 524 to 539 (GAAIGLAWIPYFGPAA) is fusion peptide. Residues 554–595 (LICGLRQLANETTQALQLFLRATTELRTFSILNRKAIDFLLQ) adopt a coiled-coil conformation. Asparagine 563 is a glycosylation site (N-linked (GlcNAc...) asparagine; by host). A coiled-coil region spans residues 615 to 634 (WTKNITDKIDQIIHDFVDNN). A glycan (N-linked (GlcNAc...) asparagine; by host) is linked at asparagine 618. Residues 651–671 (WVPAGIGITGVIIAIIALLCI) traverse the membrane as a helical segment. 2 S-palmitoyl cysteine; by host lipidation sites follow: cysteine 670 and cysteine 672. At 672–676 (CKFML) the chain is on the cytoplasmic side.

Belongs to the filoviruses glycoprotein family. As to quaternary structure, homotrimer; each monomer consists of a GP1 and a GP2 subunit linked by disulfide bonds. The resulting peplomers (GP1,2) protrude from the virus surface as spikes. GP1 and GP2delta are part of GP1,2delta soluble complexes released by ectodomain shedding. GP1,2 interacts with host integrin ITGAV/alpha-V and CLEC10A. Also binds human CD209 and CLEC4M (collectively referred to as DC-SIGN(R)), as well as human FOLR1. Interacts with host entry receptor NPC1. The signal peptide region modulates GP's high mannose glycosylation, thereby determining the efficiency of the interactions with DC-SIGN(R). Post-translationally, N-glycosylated. In terms of processing, O-glycosylated in the mucin-like region. Palmitoylation of GP2 is not required for its function. Post-translationally, specific enzymatic cleavages in vivo yield mature proteins. The precursor is processed into GP1 and GP2 by host cell furin in the trans Golgi, and maybe by other host proteases, to yield the mature GP1 and GP2 proteins. The cleavage site corresponds to the furin optimal cleavage sequence [KR]-X-[KR]-R. This cleavage does not seem to be required for function. After the internalization of the virus into cell endosomes, GP1 C-terminus is removed by the endosomal proteases cathepsin B, cathepsin L, or both, leaving a 19-kDa N-terminal fragment which is further digested by cathepsin B. Proteolytic processing of GP1,2 by host ADAM17 can remove the transmembrane anchor of GP2 and leads to shedding of complexes consisting in GP1 and truncated GP2 (GP1,2delta).

Its subcellular location is the virion membrane. The protein resides in the host cell membrane. It is found in the secreted. In terms of biological role, GP1 is responsible for binding to the receptor(s) on target cells. Interacts with CD209/DC-SIGN and CLEC4M/DC-SIGNR which act as cofactors for virus entry into the host cell. Binding to CD209 and CLEC4M, which are respectively found on dendritic cells (DCs), and on endothelial cells of liver sinusoids and lymph node sinuses, facilitate infection of macrophages and endothelial cells. These interactions not only facilitate virus cell entry, but also allow capture of viral particles by DCs and subsequent transmission to susceptible cells without DCs infection (trans infection). Binding to the macrophage specific lectin CLEC10A also seems to enhance virus infectivity. Interaction with FOLR1/folate receptor alpha may be a cofactor for virus entry in some cell types, although results are contradictory. Members of the Tyro3 receptor tyrosine kinase family also seem to be cell entry factors in filovirus infection. Once attached, the virions are internalized through clathrin-dependent endocytosis and/or macropinocytosis. After internalization of the virus into the endosomes of the host cell, proteolysis of GP1 by two cysteine proteases, CTSB/cathepsin B and CTSL/cathepsin L presumably induces a conformational change of GP2, unmasking its fusion peptide and initiating membranes fusion. GP2 acts as a class I viral fusion protein. Under the current model, the protein has at least 3 conformational states: pre-fusion native state, pre-hairpin intermediate state, and post-fusion hairpin state. During viral and target cell membrane fusion, the coiled coil regions (heptad repeats) assume a trimer-of-hairpins structure, positioning the fusion peptide in close proximity to the C-terminal region of the ectodomain. The formation of this structure appears to drive apposition and subsequent fusion of viral and target cell membranes. Responsible for penetration of the virus into the cell cytoplasm by mediating the fusion of the membrane of the endocytosed virus particle with the endosomal membrane. Low pH in endosomes induces an irreversible conformational change in GP2, releasing the fusion hydrophobic peptide. Its function is as follows. GP1,2 which is the disulfid-linked complex of GP1 and GP2, mediates endothelial cell activation and decreases endothelial barrier function. Mediates activation of primary macrophages. At terminal stages of the viral infection, when its expression is high, GP1,2 down-modulates the expression of various host cell surface molecules that are essential for immune surveillance and cell adhesion. Down-modulates integrins ITGA1, ITGA2, ITGA3, ITGA4, ITGA5, ITGA6, ITGAV and ITGB1. GP1,2 alters the cellular recycling of the dimer alpha-V/beta-3 via a dynamin-dependent pathway. Decrease in the host cell surface expression of various adhesion molecules may lead to cell detachment, contributing to the disruption of blood vessel integrity and hemorrhages developed during Ebola virus infection (cytotoxicity). This cytotoxicity appears late in the infection, only after the massive release of viral particles by infected cells. Down-modulation of host MHC-I, leading to altered recognition by immune cells, may explain the immune suppression and inflammatory dysfunction linked to Ebola infection. Also down-modulates EGFR surface expression. Counteracts the antiviral effect of host tetherin. Functionally, GP2delta is part of the complex GP1,2delta released by host ADAM17 metalloprotease. This secreted complex may play a role in the pathogenesis of the virus by efficiently blocking the neutralizing antibodies that would otherwise neutralize the virus surface glycoproteins GP1,2. Might therefore contribute to the lack of inflammatory reaction seen during infection in spite the of extensive necrosis and massive virus production. GP1,2delta does not seem to be involved in activation of primary macrophages. The protein is Envelope glycoprotein (GP) of Tai Forest ebolavirus (strain Cote d'Ivoire-94) (TAFV).